Consider the following 61-residue polypeptide: Putative neurotoxin-A (61 aa).

Residues 1–19 (MKTVCGVFMVLLALTVLLA) form the signal peptide. Intrachain disulfides connect Cys31/Cys50, Cys36/Cys55, and Cys40/Cys57.

Belongs to the short scorpion toxin superfamily. In terms of tissue distribution, expressed by the venom gland.

Its subcellular location is the secreted. In Lychas mucronatus (Chinese swimming scorpion), this protein is Putative neurotoxin-A.